A 205-amino-acid chain; its full sequence is UPF0301 protein AZC_0488 (205 aa).

The protein belongs to the UPF0301 (AlgH) family.

In Azorhizobium caulinodans (strain ATCC 43989 / DSM 5975 / JCM 20966 / LMG 6465 / NBRC 14845 / NCIMB 13405 / ORS 571), this protein is UPF0301 protein AZC_0488.